Reading from the N-terminus, the 300-residue chain is SNAP25 homologous protein SNAP33 (300 aa).

Disordered stretches follow at residues Met-1–Phe-76 and Trp-176–Ala-228. Position 29 is a phosphoserine (Ser-29). The segment covering Thr-38 to Pro-49 has biased composition (polar residues). Positions Thr-190–Leu-208 are enriched in basic and acidic residues. Residues Glu-235–Leu-297 enclose the t-SNARE coiled-coil homology domain.

The protein belongs to the SNAP-25 family. In terms of assembly, interacts with the cytokinesis-specific syntaxin KNOLLE and with SYP121. Binds to EXO70B2. In terms of tissue distribution, ubiquitous, with a strong expression in root tips, ovules, very young leaves, vascular tissue, hydathodes, stipules and the abscission and dehiscence zones of the siliques.

Its subcellular location is the membrane. In terms of biological role, t-SNARE involved in diverse vesicle trafficking and membrane fusion processes, including cell plate formation. May function in the secretory pathway. This is SNAP25 homologous protein SNAP33 from Arabidopsis thaliana (Mouse-ear cress).